We begin with the raw amino-acid sequence, 353 residues long: D-alanine--D-alanine ligase (353 aa).

Residues 141-349 (KAAFAAAGLP…LEELVSQLVI (209 aa)) enclose the ATP-grasp domain. 176-231 (EAKLKYPCFVKPANLGSSVGISKAQNRNELLIGLDKAASLDRRIVVEQGVSARELE) contacts ATP. Mg(2+) is bound by residues aspartate 302, glutamate 316, and asparagine 318.

Belongs to the D-alanine--D-alanine ligase family. Mg(2+) serves as cofactor. The cofactor is Mn(2+).

Its subcellular location is the cytoplasm. The enzyme catalyses 2 D-alanine + ATP = D-alanyl-D-alanine + ADP + phosphate + H(+). It participates in cell wall biogenesis; peptidoglycan biosynthesis. Its function is as follows. Cell wall formation. The sequence is that of D-alanine--D-alanine ligase from Prochlorococcus marinus (strain MIT 9303).